The following is a 466-amino-acid chain: Asparagine--tRNA ligase (466 aa).

This sequence belongs to the class-II aminoacyl-tRNA synthetase family. Homodimer.

It is found in the cytoplasm. It catalyses the reaction tRNA(Asn) + L-asparagine + ATP = L-asparaginyl-tRNA(Asn) + AMP + diphosphate + H(+). This chain is Asparagine--tRNA ligase, found in Sodalis glossinidius (strain morsitans).